The primary structure comprises 317 residues: Beta-ketoacyl-[acyl-carrier-protein] synthase III (317 aa).

Active-site residues include C112 and H244. Residues 245–249 are ACP-binding; it reads QANLR. The active site involves N274.

This sequence belongs to the thiolase-like superfamily. FabH family. In terms of assembly, homodimer.

Its subcellular location is the cytoplasm. It carries out the reaction malonyl-[ACP] + acetyl-CoA + H(+) = 3-oxobutanoyl-[ACP] + CO2 + CoA. The protein operates within lipid metabolism; fatty acid biosynthesis. Its function is as follows. Catalyzes the condensation reaction of fatty acid synthesis by the addition to an acyl acceptor of two carbons from malonyl-ACP. Catalyzes the first condensation reaction which initiates fatty acid synthesis and may therefore play a role in governing the total rate of fatty acid production. Possesses both acetoacetyl-ACP synthase and acetyl transacylase activities. Its substrate specificity determines the biosynthesis of branched-chain and/or straight-chain of fatty acids. The chain is Beta-ketoacyl-[acyl-carrier-protein] synthase III from Salmonella paratyphi A (strain ATCC 9150 / SARB42).